Reading from the N-terminus, the 592-residue chain is Aspartate--tRNA ligase (592 aa).

Glu176 contacts L-aspartate. Residues 200–203 (QIFK) form an aspartate region. Arg222 serves as a coordination point for L-aspartate. ATP-binding positions include 222–224 (RDE) and Gln231. An L-aspartate-binding site is contributed by His450. Glu484 is a binding site for ATP. Arg491 contributes to the L-aspartate binding site. Residue 536–539 (GLDR) participates in ATP binding.

This sequence belongs to the class-II aminoacyl-tRNA synthetase family. Type 1 subfamily. As to quaternary structure, homodimer.

Its subcellular location is the cytoplasm. It carries out the reaction tRNA(Asp) + L-aspartate + ATP = L-aspartyl-tRNA(Asp) + AMP + diphosphate. In terms of biological role, catalyzes the attachment of L-aspartate to tRNA(Asp) in a two-step reaction: L-aspartate is first activated by ATP to form Asp-AMP and then transferred to the acceptor end of tRNA(Asp). This is Aspartate--tRNA ligase from Macrococcus caseolyticus (strain JCSC5402) (Macrococcoides caseolyticum).